A 372-amino-acid polypeptide reads, in one-letter code: tRNA-specific 2-thiouridylase MnmA (372 aa).

ATP contacts are provided by residues 11-18 (GLSGGVDS) and Met36. The interval 106-108 (NPD) is interaction with target base in tRNA. The active-site Nucleophile is Cys111. Residues Cys111 and Cys204 are joined by a disulfide bond. Gly136 contributes to the ATP binding site. The tract at residues 154 to 156 (KDQ) is interaction with tRNA. Residue Cys204 is the Cysteine persulfide intermediate of the active site. Residues 311–312 (RY) form an interaction with tRNA region.

This sequence belongs to the MnmA/TRMU family.

It localises to the cytoplasm. The catalysed reaction is S-sulfanyl-L-cysteinyl-[protein] + uridine(34) in tRNA + AH2 + ATP = 2-thiouridine(34) in tRNA + L-cysteinyl-[protein] + A + AMP + diphosphate + H(+). In terms of biological role, catalyzes the 2-thiolation of uridine at the wobble position (U34) of tRNA, leading to the formation of s(2)U34. The chain is tRNA-specific 2-thiouridylase MnmA from Mycoplasmopsis synoviae (strain 53) (Mycoplasma synoviae).